The sequence spans 576 residues: Malonate--CoA ligase ACSF3, mitochondrial (576 aa).

A mitochondrion-targeting transit peptide spans 1 to 83 (MLPHVVLTFR…RSLRLSQEIC (83 aa)). Residues 202 to 210 (TSGTTGRPK), aspartate 457, arginine 471, and lysine 563 each bind ATP.

It belongs to the ATP-dependent AMP-binding enzyme family.

It is found in the mitochondrion. The enzyme catalyses tetracosanoate + ATP + CoA = tetracosanoyl-CoA + AMP + diphosphate. It carries out the reaction malonate + ATP + CoA = malonyl-CoA + AMP + diphosphate. In terms of biological role, catalyzes the initial reaction in intramitochondrial fatty acid synthesis, by activating malonate and methylmalonate, but not acetate, into their respective CoA thioester. May have some preference toward very-long-chain substrates. The sequence is that of Malonate--CoA ligase ACSF3, mitochondrial from Homo sapiens (Human).